The following is a 133-amino-acid chain: MLSPEAERVLRYLVEVEELAEEVLADKRQIVDLDTKRNRNREGLRALQKDLSLTEDVMVCFGNMFIRMPHPETKEMIEKDQEHLDKEIERLRKQLKVKVNRLFEAQGKPELKGFNLTPLNQDELKALKVILKG.

The protein belongs to the prefoldin subunit beta family. As to quaternary structure, component of the PAQosome complex which is responsible for the biogenesis of several protein complexes and which consists of R2TP complex members RUVBL1, RUVBL2, RPAP3 and PIH1D1, URI complex members PFDN2, PFDN6, PDRG1, UXT and URI1 as well as ASDURF, POLR2E and DNAAF10/WDR92.

The protein localises to the cytoplasm. In terms of biological role, may play a role in chaperone-mediated protein folding. The chain is p53 and DNA damage-regulated protein 1 (PDRG1) from Bos taurus (Bovine).